The sequence spans 284 residues: 2,3,4,5-tetrahydropyridine-2,6-dicarboxylate N-succinyltransferase (284 aa).

Substrate-binding residues include arginine 111 and aspartate 148.

It belongs to the transferase hexapeptide repeat family. Homotrimer.

Its subcellular location is the cytoplasm. The enzyme catalyses (S)-2,3,4,5-tetrahydrodipicolinate + succinyl-CoA + H2O = (S)-2-succinylamino-6-oxoheptanedioate + CoA. Its pathway is amino-acid biosynthesis; L-lysine biosynthesis via DAP pathway; LL-2,6-diaminopimelate from (S)-tetrahydrodipicolinate (succinylase route): step 1/3. This Agrobacterium fabrum (strain C58 / ATCC 33970) (Agrobacterium tumefaciens (strain C58)) protein is 2,3,4,5-tetrahydropyridine-2,6-dicarboxylate N-succinyltransferase.